Reading from the N-terminus, the 258-residue chain is 5'-nucleotidase SurE (258 aa).

4 residues coordinate a divalent metal cation: Asp-13, Asp-14, Ser-44, and Asn-92. Residues 237–258 (SPLTAPHSTEHHDALDGIATEF) form a disordered region.

It belongs to the SurE nucleotidase family. A divalent metal cation is required as a cofactor.

Its subcellular location is the cytoplasm. It carries out the reaction a ribonucleoside 5'-phosphate + H2O = a ribonucleoside + phosphate. Nucleotidase that shows phosphatase activity on nucleoside 5'-monophosphates. In Halobacterium salinarum (strain ATCC 29341 / DSM 671 / R1), this protein is 5'-nucleotidase SurE.